A 393-amino-acid chain; its full sequence is tRNA(Met) cytidine acetate ligase (393 aa).

ATP-binding residues include Gly81, Asn142, and Arg167.

The protein belongs to the TmcAL family.

It is found in the cytoplasm. The catalysed reaction is cytidine(34) in elongator tRNA(Met) + acetate + ATP = N(4)-acetylcytidine(34) in elongator tRNA(Met) + AMP + diphosphate. Functionally, catalyzes the formation of N(4)-acetylcytidine (ac(4)C) at the wobble position of elongator tRNA(Met), using acetate and ATP as substrates. First activates an acetate ion to form acetyladenylate (Ac-AMP) and then transfers the acetyl group to tRNA to form ac(4)C34. This is tRNA(Met) cytidine acetate ligase from Bacillus cereus (strain ZK / E33L).